The following is a 189-amino-acid chain: Chitin synthase 1 (189 aa).

Belongs to the chitin synthase family.

It is found in the cell membrane. The catalysed reaction is [(1-&gt;4)-N-acetyl-beta-D-glucosaminyl](n) + UDP-N-acetyl-alpha-D-glucosamine = [(1-&gt;4)-N-acetyl-beta-D-glucosaminyl](n+1) + UDP + H(+). Its function is as follows. Polymerizes chitin, a structural polymer of the cell wall and septum, by transferring the sugar moiety of UDP-GlcNAc to the non-reducing end of the growing chitin polymer. This Exophiala exophialae (Black yeast-like fungus) protein is Chitin synthase 1 (CHS1).